The sequence spans 550 residues: Medium-chain acyl-CoA ligase Mig (550 aa).

Positions 1-19 (MSDTTTAFTVPAVAKAVAA) are cleaved as a signal peptide.

The protein belongs to the ATP-dependent AMP-binding enzyme family.

It is found in the secreted. The protein resides in the cell wall. It catalyses the reaction a medium-chain fatty acid + ATP + CoA = a medium-chain fatty acyl-CoA + AMP + diphosphate. The enzyme catalyses hexanoate + ATP + CoA = hexanoyl-CoA + AMP + diphosphate. The catalysed reaction is heptanoate + ATP + CoA = heptanoyl-CoA + AMP + diphosphate. It carries out the reaction octanoate + ATP + CoA = octanoyl-CoA + AMP + diphosphate. It catalyses the reaction decanoate + ATP + CoA = decanoyl-CoA + AMP + diphosphate. The enzyme catalyses dodecanoate + ATP + CoA = dodecanoyl-CoA + AMP + diphosphate. The catalysed reaction is tetradecanoate + ATP + CoA = tetradecanoyl-CoA + AMP + diphosphate. It carries out the reaction (9Z)-octadecenoate + ATP + CoA = (9Z)-octadecenoyl-CoA + AMP + diphosphate. It catalyses the reaction (9Z,12Z,15Z)-octadecatrienoate + ATP + CoA = (9Z,12Z,15Z)-octadecatrienoyl-CoA + AMP + diphosphate. The enzyme catalyses (5Z,8Z,11Z,14Z)-eicosatetraenoate + ATP + CoA = (5Z,8Z,11Z,14Z)-eicosatetraenoyl-CoA + AMP + diphosphate. Its pathway is lipid metabolism; fatty acid metabolism. With respect to regulation, inhibited by 2-hydroxydodecanoic acid, a typical inhibitor of medium-chain acyl-CoA synthetases. Its function is as follows. Catalyzes the activation of medium-chain fatty acids as acyl-coenzyme A (acyl-CoA). Shows maximal activity with saturated fatty acids of medium-chain length between C6 and C12. Has lower activity with tridecanoic acid (C13), tetradecanoic acid (C14) and with unsaturated fatty acids like oleic acid (C18:1), linolenic acid (C18:3) and arachidonic acid (C20:4). Shows weak activity with some aromatic carbon acids. Involved in the metabolism of fatty acid during mycobacterial survival in macrophages. This chain is Medium-chain acyl-CoA ligase Mig, found in Mycobacterium avium.